Here is a 136-residue protein sequence, read N- to C-terminus: Histone H3.3 (136 aa).

The segment at 1 to 43 (MARTKQTARKSTGGKAPRKQLATKAARKSAPSTGGVKKPHRYR) is disordered. Residue Lys-5 is modified to N6,N6,N6-trimethyllysine; alternate. Lys-5 is modified (N6,N6-dimethyllysine; alternate). An N6-methyllysine; alternate mark is found at Lys-5 and Lys-10. Lys-10 carries the N6-acetyllysine; alternate modification. Position 11 is a phosphoserine (Ser-11). Lys-15 is subject to N6,N6-dimethyllysine; alternate. N6-acetyllysine; alternate is present on residues Lys-15, Lys-19, Lys-24, Lys-28, and Lys-37. An N6-methyllysine; alternate mark is found at Lys-19, Lys-24, Lys-28, and Lys-37. Lys-28 and Lys-37 each carry N6,N6,N6-trimethyllysine; alternate. N6,N6-dimethyllysine; alternate is present on residues Lys-28 and Lys-37. N6-acetyllysine occurs at positions 57 and 65. Position 80 is an N6,N6,N6-trimethyllysine; alternate (Lys-80). Lys-80 is modified (N6,N6-dimethyllysine; alternate). Lys-80 is modified (N6-methyllysine; alternate).

The protein belongs to the histone H3 family. In terms of assembly, the nucleosome is a histone octamer containing two molecules each of H2A, H2B, H3 and H4 assembled in one H3-H4 heterotetramer and two H2A-H2B heterodimers. The octamer wraps approximately 147 bp of DNA. In terms of processing, phosphorylated at Ser-11. This is required for transcriptional activation through TBP recruitment to the promoters. Phosphorylation at Ser-11 also promotes subsequent acetylation at Lys-15. Mono-, di- and trimethylation of Lys-5 by the COMPASS complex activates gene expression by regulating transcription elongation and plays a role in telomere length maintenance. Lys-5 methylation enrichment correlates with transcription levels, and occurs in a 5' to 3' gradient with tri-methyl enrichment at the 5'-end of genes, shifting to di-methyl and then mono-methyl. The COMPASS mediated di and trimethylation of Lys-5 requires histone H2B monoubiquitination. Methylation of Lys-37 by SET2 represses gene expression. Methylation of Lys-80 by DOT1 is required for association of SIR proteins with telomeric regions and for telomeric silencing. Post-translationally, acetylation of histone H3 leads to transcriptional activation. Acetylation at Lys-15 is promoted by the phosphorylation at Ser-11. Acetylation at Lys-57 occurs predominantly in newly synthesized H3 molecule during G1, S and G2/M of the cell cycle and may be involved in DNA repair.

It is found in the nucleus. Its subcellular location is the chromosome. Core component of nucleosome. Nucleosomes wrap and compact DNA into chromatin, limiting DNA accessibility to the cellular machineries which require DNA as a template. Histones thereby play a central role in transcription regulation, DNA repair, DNA replication and chromosomal stability. DNA accessibility is regulated via a complex set of post-translational modifications of histones, also called histone code, and nucleosome remodeling. This chain is Histone H3.3 (HHT3), found in Trichinella pseudospiralis (Parasitic roundworm).